We begin with the raw amino-acid sequence, 568 residues long: Alpha-1,3-galactosidase A (568 aa).

An N-terminal signal peptide occupies residues 1–17; sequence MMSVWFIQLAIFAQSRI. PbH1 repeat units lie at residues 87–125, 243–265, 299–321, 409–431, 432–454, and 465–486; these read LYLN…VLKN, SKGI…VCQY, RGMI…NIHG, TPEV…LITT, RRKS…FVAD, and VHDL…ISID.

It belongs to the glycosyl hydrolase 110 family. A subfamily.

The enzyme catalyses Hydrolysis of terminal, non-reducing branched (1-&gt;3)-alpha-D-galactosidic residues, producing free D-galactose.. It catalyses the reaction Hydrolysis of terminal, non-reducing alpha-D-galactose residues in alpha-D-galactosides, including galactose oligosaccharides, galactomannans and galactolipids.. Functionally, alpha-galactosidase that specifically removes branched alpha-1,3-linked galactose residues present in blood group B antigens. Has no activity toward linear alpha-1,3-linked galactose residues. This chain is Alpha-1,3-galactosidase A (glaA), found in Bacteroides thetaiotaomicron (strain ATCC 29148 / DSM 2079 / JCM 5827 / CCUG 10774 / NCTC 10582 / VPI-5482 / E50).